A 326-amino-acid polypeptide reads, in one-letter code: Biotin synthase (326 aa).

A Radical SAM core domain is found at 42-266 (NEIQLAALLN…LMPKSYVRLA (225 aa)). [4Fe-4S] cluster is bound by residues Cys-57, Cys-61, and Cys-64. Residues Cys-101, Cys-132, Cys-192, and Arg-264 each contribute to the [2Fe-2S] cluster site.

It belongs to the radical SAM superfamily. Biotin synthase family. In terms of assembly, homodimer. Requires [4Fe-4S] cluster as cofactor. It depends on [2Fe-2S] cluster as a cofactor.

It carries out the reaction (4R,5S)-dethiobiotin + (sulfur carrier)-SH + 2 reduced [2Fe-2S]-[ferredoxin] + 2 S-adenosyl-L-methionine = (sulfur carrier)-H + biotin + 2 5'-deoxyadenosine + 2 L-methionine + 2 oxidized [2Fe-2S]-[ferredoxin]. The protein operates within cofactor biosynthesis; biotin biosynthesis; biotin from 7,8-diaminononanoate: step 2/2. Catalyzes the conversion of dethiobiotin (DTB) to biotin by the insertion of a sulfur atom into dethiobiotin via a radical-based mechanism. The sequence is that of Biotin synthase from Ehrlichia chaffeensis (strain ATCC CRL-10679 / Arkansas).